Consider the following 840-residue polypeptide: MSSTGVKTMKDFMLNKSNIRNMCVIAHVDHGKSTLTDSLVTLAGIISNEKAGVARYTDTRPDEQERCITIKSTSISMYYEIEDKEDIPADANGNGFLINLIDSPGHVDFSSEVTAALRVTDGALVVVDCVEGVCVQTETVLRQALTERVKPIVIINKVDRVILELKEEPEEAYQSFCRSIENVNVLISTYKDELLGDVQVSPGEGTVAFGSGLHGWAFTLEKFAKMWSAKFGIDRKRMLEKLWGDNYWDAKAKKWKKNGKGDHGEVLQRGFVQFCFDPITKLFNAIMEGRKADYEKMLTNLQIKLSADDKEKEGKELLKTVMKLWLPAGVTLLEMIVLHLPSPVVAQKYRTSNLYTGPMDDEAAKAMANCDEKGPLMMYVSKMIPTNDKGRFYAFGRVFSGTIRTGGKARICGPNYVPGKKDDCVIKNIQRTMLMMGRYTDPIDECPCGNVIGLVGVDQYLLKSGTITDSVAHIIKDMKFSVSPVVRVAVETKNPSDLPKLVEGMKRLSRSDPLCLCYTEESGEHIVAGAGELHLEVCLKELQEDYCSGVPLIVTEPVVSFRETITEPSRIQCLSKSANNQNRLFMRAFPFPEGLAEDIEAGEIKPDTDFKERAKFLSEKYGWDVDEARKIWCFGPDNCGPNLFVDVTKGIQYLNEVKDSIVNGFNNAMHDGVVCNEQIRGVRINLEDVKLHADAIHRGGAQMIPCARRCCFACVLTGAPSLLEPMYLAEIQCPESAIGGIYTVMSRRRGKIISEEQRPGTPLFNVRAYLPVCESFGFTADLRSHTSGQAFPQCVFDHWQLLNGDVTDATSKVGSIVAAIRKRKGLPEGVPGLDKFYDKL.

The tr-type G domain occupies 17-251 (SNIRNMCVIA…LWGDNYWDAK (235 aa)). 26 to 33 (AHVDHGKS) lines the GTP pocket. Phosphothreonine occurs at positions 57 and 59. Residues 156–159 (NKVD) and 211–213 (SGL) contribute to the GTP site. Histidine 697 carries the diphthamide modification.

This sequence belongs to the TRAFAC class translation factor GTPase superfamily. Classic translation factor GTPase family. EF-G/EF-2 subfamily. Phosphorylation by EF-2 kinase completely inactivates EF-2.

The protein localises to the cytoplasm. It carries out the reaction GTP + H2O = GDP + phosphate + H(+). Catalyzes the GTP-dependent ribosomal translocation step during translation elongation. During this step, the ribosome changes from the pre-translocational (PRE) to the post-translocational (POST) state as the newly formed A-site-bound peptidyl-tRNA and P-site-bound deacylated tRNA move to the P and E sites, respectively. Catalyzes the coordinated movement of the two tRNA molecules, the mRNA and conformational changes in the ribosome. This is Elongation factor 2 (EF-2) from Entamoeba histolytica.